Reading from the N-terminus, the 792-residue chain is Molybdenum cofactor sulfurase (792 aa).

The residue at position 246 (K246) is an N6-(pyridoxal phosphate)lysine. The active site involves C414. An MOSC domain is found at 646 to 792 (LRLLRQSSQR…LTCGDVVVVT (147 aa)). S748 bears the Phosphoserine mark.

The protein belongs to the class-V pyridoxal-phosphate-dependent aminotransferase family. MOCOS subfamily. Pyridoxal 5'-phosphate serves as cofactor.

The catalysed reaction is Mo-molybdopterin + L-cysteine + AH2 = thio-Mo-molybdopterin + L-alanine + A + H2O. The protein operates within cofactor biosynthesis; molybdopterin biosynthesis. Functionally, sulfurates the molybdenum cofactor. Sulfation of molybdenum is essential for xanthine dehydrogenase (XDH) and aldehyde oxidase (ADO) enzymes in which molybdenum cofactor is liganded by 1 oxygen and 1 sulfur atom in active form. The sequence is that of Molybdenum cofactor sulfurase from Drosophila pseudoobscura pseudoobscura (Fruit fly).